The chain runs to 217 residues: uncharacterized protein (217 aa).

Positions 14–217 (LAVNNLCIER…NELATEIISL (204 aa)) constitute an ABC transporter domain. 46–53 (GEIGSGKT) is a binding site for ATP.

It belongs to the ABC transporter superfamily.

This is an uncharacterized protein from Haemophilus influenzae (strain ATCC 51907 / DSM 11121 / KW20 / Rd).